A 125-amino-acid polypeptide reads, in one-letter code: Phosphoribosyl-AMP cyclohydrolase (125 aa).

Asp-91 is a Mg(2+) binding site. Cys-92 contacts Zn(2+). Asp-93 and Asp-95 together coordinate Mg(2+). Cys-108 and Cys-115 together coordinate Zn(2+).

The protein belongs to the PRA-CH family. Homodimer. The cofactor is Mg(2+). It depends on Zn(2+) as a cofactor.

The protein localises to the cytoplasm. The enzyme catalyses 1-(5-phospho-beta-D-ribosyl)-5'-AMP + H2O = 1-(5-phospho-beta-D-ribosyl)-5-[(5-phospho-beta-D-ribosylamino)methylideneamino]imidazole-4-carboxamide. It functions in the pathway amino-acid biosynthesis; L-histidine biosynthesis; L-histidine from 5-phospho-alpha-D-ribose 1-diphosphate: step 3/9. Catalyzes the hydrolysis of the adenine ring of phosphoribosyl-AMP. This Streptomyces griseus subsp. griseus (strain JCM 4626 / CBS 651.72 / NBRC 13350 / KCC S-0626 / ISP 5235) protein is Phosphoribosyl-AMP cyclohydrolase.